Consider the following 503-residue polypeptide: Cytochrome P450 3A13 (503 aa).

Cysteine 442 serves as a coordination point for heme.

It belongs to the cytochrome P450 family. The cofactor is heme.

The protein localises to the endoplasmic reticulum membrane. Its subcellular location is the microsome membrane. It catalyses the reaction an organic molecule + reduced [NADPH--hemoprotein reductase] + O2 = an alcohol + oxidized [NADPH--hemoprotein reductase] + H2O + H(+). Functionally, can activate aflatoxin B1 to a genotoxic product. This chain is Cytochrome P450 3A13 (Cyp3a13), found in Mus musculus (Mouse).